The following is a 264-amino-acid chain: S-adenosylmethionine decarboxylase proenzyme (264 aa).

Catalysis depends on Ser112, which acts as the Schiff-base intermediate with substrate; via pyruvic acid. Ser112 bears the Pyruvic acid (Ser); by autocatalysis mark. The active-site Proton acceptor; for processing activity is His117. Catalysis depends on Cys140, which acts as the Proton donor; for catalytic activity.

It belongs to the prokaryotic AdoMetDC family. Type 2 subfamily. Heterooctamer of four alpha and four beta chains arranged as a tetramer of alpha/beta heterodimers. Pyruvate is required as a cofactor. Post-translationally, is synthesized initially as an inactive proenzyme. Formation of the active enzyme involves a self-maturation process in which the active site pyruvoyl group is generated from an internal serine residue via an autocatalytic post-translational modification. Two non-identical subunits are generated from the proenzyme in this reaction, and the pyruvate is formed at the N-terminus of the alpha chain, which is derived from the carboxyl end of the proenzyme. The post-translation cleavage follows an unusual pathway, termed non-hydrolytic serinolysis, in which the side chain hydroxyl group of the serine supplies its oxygen atom to form the C-terminus of the beta chain, while the remainder of the serine residue undergoes an oxidative deamination to produce ammonia and the pyruvoyl group blocking the N-terminus of the alpha chain.

The catalysed reaction is S-adenosyl-L-methionine + H(+) = S-adenosyl 3-(methylsulfanyl)propylamine + CO2. It participates in amine and polyamine biosynthesis; S-adenosylmethioninamine biosynthesis; S-adenosylmethioninamine from S-adenosyl-L-methionine: step 1/1. Catalyzes the decarboxylation of S-adenosylmethionine to S-adenosylmethioninamine (dcAdoMet), the propylamine donor required for the synthesis of the polyamines spermine and spermidine from the diamine putrescine. The polypeptide is S-adenosylmethionine decarboxylase proenzyme (Enterobacter sp. (strain 638)).